Reading from the N-terminus, the 760-residue chain is Cyclin-D-binding Myb-like transcription factor 1 (760 aa).

An interaction with CCND2 region spans residues 1–237; it reads MSTVEEDSDT…TPEEIEKLKE (237 aa). Residues 24-63 form a disordered region; that stretch reads DTDGNLILHCPQNDPDEIDSEDSTEPPHKRLCLSSEDDQS. Over residues 37-47 the composition is skewed to acidic residues; that stretch reads DPDEIDSEDST. The segment at 87–170 is required for transcriptional activation; it reads VTMTATTEVA…IDILMNNIER (84 aa). The interval 87-458 is required for DNA-binding; sequence VTMTATTEVA…DNTAISPSPM (372 aa). Residues 176-690 are interaction with CCND1, CCND2 and CCND3; that stretch reads GIKDATEIIF…PTIVHQVHQT (515 aa). Residues 225-263 form the Myb-like 1 domain; that stretch reads GKYTPEEIEKLKELRIKHGNDWATIGAALGRSASSVKDR. The region spanning 268 to 333 is the HTH myb-type domain; it reads KDTCNTGKWT…KWLNYLNWKQ (66 aa). Positions 306–329 form a DNA-binding region, H-T-H motif; that stretch reads WAAVAERVGTRSEKQCRSKWLNYL. The Myb-like 2 domain occupies 339–388; it reads WTKEDEINLILRIAELDVADENDINWDLLAEGWSSVRSPQWLRSKWWTIK. The interval 459–760 is required for transcriptional activation; sequence AALQIPVQIT…KDVEDLVNCH (302 aa). 2 disordered regions span residues 593-614 and 738-760; these read DSDL…DTFP and IGSS…VNCH.

Belongs to the DMTF1 family. Interacts with the D-type cyclins CCND1, CCND2 and CCND3. Interaction with D-type cyclins may modulate transcriptional activation by this protein. Phosphorylated by the cyclin-D2/CDK4, cyclin-D3/CDK4 and cyclin-D2/CDK6 complexes and to a lesser extent by the cyclin-D1/CDK4 complex.

Its subcellular location is the nucleus. Its function is as follows. Transcriptional activator which activates the CDKN2A/ARF locus in response to Ras-Raf signaling, thereby promoting p53/TP53-dependent growth arrest. Binds to the consensus sequence 5'-CCCG[GT]ATGT-3'. In Rattus norvegicus (Rat), this protein is Cyclin-D-binding Myb-like transcription factor 1 (Dmtf1).